The following is a 1093-amino-acid chain: uncharacterized protein (1093 aa).

This is an uncharacterized protein from Escherichia coli (strain K12).